Reading from the N-terminus, the 426-residue chain is Chromatin structure-remodeling complex subunit SFH1 (426 aa).

S78 carries the phosphoserine modification. The interaction with STH1 stretch occupies residues 201-242; the sequence is AIMIPITLDIEHMGHTIKDQFLWNYNDDSISPEEFASIYCKD.

Belongs to the SNF5 family. In terms of assembly, interacts directly with STH1. Component of the two forms of the RSC complex composed of at least either RSC1 or RSC2, and ARP7, ARP9, LDB7, NPL6, RSC3, RSC30, RSC4, RSC58, RSC6, RSC8, RSC9, SFH1, STH1, HTL1 and probably RTT102. The complexes interact with histone and histone variant components of centromeric chromatin. Post-translationally, phosphorylated in the G1 phase.

It localises to the nucleus. Its function is as follows. Component of the chromatin structure-remodeling complex (RSC), which is involved in transcription regulation and nucleosome positioning. RSC is responsible for the transfer of a histone octamer from a nucleosome core particle to naked DNA. The reaction requires ATP and involves an activated RSC-nucleosome intermediate. Remodeling reaction also involves DNA translocation, DNA twist and conformational change. As a reconfigurer of centromeric and flanking nucleosomes, RSC complex is required both for proper kinetochore function in chromosome segregation and, via a PKC1-dependent signaling pathway, for organization of the cellular cytoskeleton. This subunit is essential for mitotic growth and required for cell cycle progression. The polypeptide is Chromatin structure-remodeling complex subunit SFH1 (SFH1) (Saccharomyces cerevisiae (strain ATCC 204508 / S288c) (Baker's yeast)).